The primary structure comprises 241 residues: Histone H1-II (241 aa).

Over residues 1-10 (MASDAPEVKA) the composition is skewed to basic and acidic residues. Disordered regions lie at residues 1-27 (MASD…THPP) and 89-241 (NSYK…AKKA). Residues 11–20 (PKAKTQKKPK) show a composition bias toward basic residues. One can recognise an H15 domain in the interval 24 to 95 (THPPYIQMVT…KVKNSYKLSD (72 aa)). The span at 99 to 111 (SKAKAAAKPKAAP) shows a compositional bias: basic residues. 3 tandem repeats follow at residues 111–116 (PKKAAA), 117–122 (PKKAAA), and 123–128 (PKKAKA). The 8 X 6 AA repeats of P-K-K-A-[AK]-A stretch occupies residues 111–217 (PKKAAAPKKA…KAATPKKAKA (107 aa)). Residues 129-155 (PKKEGEKKAVKPKSEKKAAKPKTEKKP) show a composition bias toward basic and acidic residues. Composition is skewed to basic residues over residues 156 to 184 (KAAK…KATP) and 194 to 241 (AAPK…AKKA). Residues 183–186 (TPKK) mediate DNA binding. 5 consecutive repeat copies span residues 184 to 189 (PKKAAA), 190 to 195 (PKKAAA), 196 to 201 (PKKAKA), 204 to 209 (PKKAKA), and 212 to 217 (PKKAKA). 2 DNA-binding regions span residues 203-206 (TPKK) and 211-214 (TPKK).

The protein belongs to the histone H1/H5 family.

It localises to the nucleus. The protein resides in the chromosome. Histones H1 are necessary for the condensation of nucleosome chains into higher-order structures. The sequence is that of Histone H1-II (H1-II) from Volvox carteri (Green alga).